Here is a 331-residue protein sequence, read N- to C-terminus: uncharacterized protein (331 aa).

5 consecutive Pentapeptide repeat domains span residues 50 to 89 (ENLQ…RLGH), 90 to 129 (CQMN…NFKG), 140 to 179 (ANLR…NLQE), 185 to 224 (ANLR…KLTG), and 230 to 269 (TNLS…NLTQ).

This is an uncharacterized protein from Synechocystis sp. (strain ATCC 27184 / PCC 6803 / Kazusa).